We begin with the raw amino-acid sequence, 602 residues long: MYASKRRQRNFKRVRDPPKQLTNTNPSKRHRERLNGELETVAMLLPYDSSTISRLDKLSVLRLAVSFLQCKAHFQACLHNSQFLSAGFPMSTHSYSYQPHPPIPFSNKVPTIFDLRIGTPMLDPEESNFEEISLKSLGGFILVLNDNGEIYYASENVENYLGFHQSDVLHQPVYDLIHSEDRDDIRQQLDSNFHIPTSSASNQFDVFAPQNSKYLERNVNARFRCLLDNTCGFLRIDMRGKLMSLHGLPSSYVMGRTASGPVLGMICVCTPFVPPSTSDLASEDMILKTKHQLDGALVSMDQKVYEMLEIDETDLPMPLYNLVHVEDAVCMAEAHKEAIKNGSSGLLVYRLVSTKTRRTYFVQSSCRMFYKNSKPESIGLTHRLLNEVEGTMLLEKRSTLKAKLLSFDDSFLQSPRNLQSTAALPLPSVLKDDQDCLEPSTSNSLFPSVPVPTPTTTKANRRRKENSHEIVPTIPSIPIPTHFDMQMFDPSWNHGVHPPAWPHDVYHLTQYPPTYPHPPGTVGYPDVQIAPVDYPGWHPNDIHMTQLPHGFTPDAQKLVPPHPQMSHFTEYPTPSTHHDLHHHPLKQDNFHLISEVTNLLGT.

A propeptide spanning residues 1 to 2 (MY) is cleaved from the precursor. A compositionally biased stretch (basic residues) spans 1–12 (MYASKRRQRNFK). Residues 1–28 (MYASKRRQRNFKRVRDPPKQLTNTNPSK) form a disordered region. 2 short sequence motifs (nuclear localization signal) span residues 5–8 (KRRQ) and 28–33 (KRHRER). Residues 18-71 (PKQLTNTNPSKRHRERLNGELETVAMLLPYDSSTISRLDKLSVLRLAVSFLQCK) enclose the bHLH domain. 3 required for maintaining the overall integrity of the AHR:ARNT heterodimer and its transcriptional activity regions span residues 41–73 (VAML…CKAH), 133–141 (SLKSLGGFI), and 266–268 (ICV). A Nuclear export signal motif is present at residues 55-63 (LDKLSVLRL). The 71-residue stretch at 126–196 (ESNFEEISLK…QQLDSNFHIP (71 aa)) folds into the PAS domain. The interval 440 to 467 (STSNSLFPSVPVPTPTTTKANRRRKENS) is disordered.

In terms of assembly, interacts with daf-21/hsp90. Interacts with aha-1. As to expression, expressed in many distinct neuronal cells including RMED, RMEV, RMEL and RMER. Functions in URX neurons to promote aggregation behavior.

The protein localises to the nucleus. In terms of biological role, probable ligand-activated transcriptional activator. Acts as a transcriptional regulator in GABAergic motor neuron cell fate specification and development. Promotes cell-type-specific expression of guanylate cyclase genes that have key roles in aggregation behavior and hyperoxia avoidance. Has no role in carbon dioxide avoidance. In Caenorhabditis elegans, this protein is Aryl hydrocarbon receptor protein 1.